We begin with the raw amino-acid sequence, 93 residues long: MMCISKLPAVLLILSVALNHLRATPVRSGSNPQMDKRKCNTATCATQRLANFLVRSSNNLGPVLPPTNVGSNTYGKRNAAGDPNRESLDFLLV.

A signal peptide spans 1–23 (MMCISKLPAVLLILSVALNHLRA). The propeptide occupies 24 to 35 (TPVRSGSNPQMD). Cysteine 39 and cysteine 44 form a disulfide bridge. The interval 64 to 93 (LPPTNVGSNTYGKRNAAGDPNRESLDFLLV) is disordered. Tyrosine 74 bears the Tyrosine amide mark. Positions 78–93 (NAAGDPNRESLDFLLV) are excised as a propeptide. A compositionally biased stretch (basic and acidic residues) spans 83–93 (PNRESLDFLLV).

This sequence belongs to the calcitonin family. As to quaternary structure, can form homodimers. Interacts with IDE and INS. Interaction with INS inhibits homodimerization and fibril formation.

Its subcellular location is the secreted. Amylin/IAPP is a glucoregulatory peptide hormone that plays an important role in the regulation of energy homeostasis. Selectively inhibits insulin-stimulated glucose utilization and glycogen deposition in muscle, while not affecting adipocyte glucose metabolism. IAPP function is mediated by the CALCR-RAMPs (AMYRs) receptor complexes. Amylin can also bind CALCR receptor in the absence of RAMPs, although it is more selective for AMYRs. This chain is Islet amyloid polypeptide, found in Mus musculus (Mouse).